Reading from the N-terminus, the 229-residue chain is Cytidylate kinase (229 aa).

12 to 20 (GPSGSGKGT) contributes to the ATP binding site.

The protein belongs to the cytidylate kinase family. Type 1 subfamily.

The protein resides in the cytoplasm. The enzyme catalyses CMP + ATP = CDP + ADP. The catalysed reaction is dCMP + ATP = dCDP + ADP. The protein is Cytidylate kinase of Pseudomonas syringae pv. tomato (strain ATCC BAA-871 / DC3000).